Consider the following 435-residue polypeptide: Galactomannan galactosyltransferase 1 (435 aa).

The Cytoplasmic portion of the chain corresponds to 1–20 (MAKFGSRNKSPKWISNGCCF). Residues 21–41 (LLGAFTALLLLWGLCSFIIPI) form a helical; Signal-anchor for type II membrane protein membrane-spanning segment. Residues 42 to 435 (PNTDPKLNSV…SPLPFGYPAA (394 aa)) are Lumenal-facing. N-linked (GlcNAc...) asparagine glycans are attached at residues N230 and N328. Residues 321-354 (EIVKTYENISERYDEVERKVEGLRRRHAEKVSEK) are a coiled coil.

This sequence belongs to the glycosyltransferase 34 family.

Its subcellular location is the golgi apparatus membrane. Functionally, galactomannan galactosyltransferase (GMGT) involved in galactomannan biosynthesis in seed endosperm. GMGT specificity is an important factor regulating the distribution and amount of alpha-1,6-galactose (Gal) substitution of the beta-1,4-linked mannan backbone. This Cyamopsis tetragonoloba (Guar) protein is Galactomannan galactosyltransferase 1 (GMGT1).